The following is a 171-amino-acid chain: Small ribosomal subunit protein uS5 (171 aa).

The region spanning tyrosine 15 to isoleucine 78 is the S5 DRBM domain.

The protein belongs to the universal ribosomal protein uS5 family. In terms of assembly, part of the 30S ribosomal subunit. Contacts proteins S4 and S8.

In terms of biological role, with S4 and S12 plays an important role in translational accuracy. Functionally, located at the back of the 30S subunit body where it stabilizes the conformation of the head with respect to the body. This chain is Small ribosomal subunit protein uS5, found in Phytoplasma australiense.